The sequence spans 253 residues: tRNA pseudouridine synthase A (253 aa).

Residue D53 is the Nucleophile of the active site. Y112 lines the substrate pocket.

Belongs to the tRNA pseudouridine synthase TruA family. Homodimer.

The enzyme catalyses uridine(38/39/40) in tRNA = pseudouridine(38/39/40) in tRNA. In terms of biological role, formation of pseudouridine at positions 38, 39 and 40 in the anticodon stem and loop of transfer RNAs. This chain is tRNA pseudouridine synthase A, found in Lactococcus lactis subsp. cremoris (strain SK11).